The following is a 202-amino-acid chain: Complement component C8 gamma chain (202 aa).

Residues 1–23 (MVLRGRAVLLAVLLAAGSLGRWA) form the signal peptide. Cysteines 96 and 188 form a disulfide. Asn-173 is a glycosylation site (N-linked (GlcNAc...) asparagine).

This sequence belongs to the calycin superfamily. Lipocalin family. Heterotrimer of 3 chains: alpha (C8A), beta (C8B) and gamma (C8G); the alpha and gamma chains are disulfide bonded. Component of the membrane attack complex (MAC), composed of complement C5b, C6, C7, C8A, C8B, C8G and multiple copies of the pore-forming subunit C9.

Its subcellular location is the secreted. It is found in the target cell membrane. Its activity is regulated as follows. Membrane attack complex (MAC) assembly is inhibited by CD59, thereby protecting self-cells from damage during complement activation. MAC assembly is also inhibited by clusterin (CLU) chaperones that inhibit polymerization of C9. In terms of biological role, component of the membrane attack complex (MAC), a multiprotein complex activated by the complement cascade, which inserts into a target cell membrane and forms a pore, leading to target cell membrane rupture and cell lysis. The MAC is initiated by proteolytic cleavage of C5 into complement C5b in response to the classical, alternative, lectin and GZMK complement pathways. The complement pathways consist in a cascade of proteins that leads to phagocytosis and breakdown of pathogens and signaling that strengthens the adaptive immune system. C8G, together with C8A and C8B, inserts into the target membrane, but does not form pores by itself. During MAC assembly, associates with C5b, C6 and C7 to form the C5b8 intermediate complex that inserts into the target membrane and traverses the bilayer increasing membrane rigidity. The chain is Complement component C8 gamma chain (C8G) from Oryctolagus cuniculus (Rabbit).